A 493-amino-acid polypeptide reads, in one-letter code: Activin receptor type-1C (493 aa).

Positions 1–20 (MTRALCSALRQALLLLAAAA) are cleaved as a signal peptide. At 22–113 (LSPGLKCVCL…PNAPKLGPME (92 aa)) the chain is on the extracellular side. Residues 114-134 (LAIIITVPVCLLSIAAMLTVW) traverse the membrane as a helical segment. The Cytoplasmic portion of the chain corresponds to 135 to 493 (ACQGRQCSYR…QLCVKEDCKA (359 aa)). Residues 165-194 (KTLKDLIYDVTASGSGSGLPLLVQRTIART) enclose the GS domain. Residues 195–485 (IVLQEIVGKG…LRIKKTISQL (291 aa)) enclose the Protein kinase domain. ATP contacts are provided by residues 201 to 209 (VGKGRFGEV) and Lys-222. Asp-323 (proton acceptor) is an active-site residue.

This sequence belongs to the protein kinase superfamily. TKL Ser/Thr protein kinase family. TGFB receptor subfamily. In terms of assembly, binds the type 2 receptor protein ACVR2A. The cofactor is Mg(2+). Requires Mn(2+) as cofactor. As to expression, present in pancreas, heart, colon, small intestine, ovary and the hippocampus, medulla oblongata and putamen of the brain. Isoform 1, isoform 2, isoform 3 and isoform 4 are all expressed in the placenta throughout pregnancy.

It localises to the membrane. It catalyses the reaction L-threonyl-[receptor-protein] + ATP = O-phospho-L-threonyl-[receptor-protein] + ADP + H(+). The catalysed reaction is L-seryl-[receptor-protein] + ATP = O-phospho-L-seryl-[receptor-protein] + ADP + H(+). Its function is as follows. Serine/threonine protein kinase which forms a receptor complex on ligand binding. The receptor complex consists of 2 type II and 2 type I transmembrane serine/threonine kinases. Type II receptors phosphorylate and activate type I receptors which autophosphorylate, then bind and activate SMAD transcriptional regulators, SMAD2 and SMAD3. Receptor for activin AB, activin B, activin E and NODAL. Upon NODAL binding, activation results in increased apoptosis and reduced proliferation through suppression of AKT signaling and the activation of Smad2-dependent signaling pathway in pancreatic beta-cells, trophoblasts, epithelial or neuronal cells. Acts as a positive regulator for macrophage activation partially through down-regulation of PPARG expression. This Homo sapiens (Human) protein is Activin receptor type-1C.